The following is a 337-amino-acid chain: CMP-N-acetylneuraminate-beta-galactosamide-alpha-2,3-sialyltransferase 1 (337 aa).

At 1–4 (MRRK) the chain is on the cytoplasmic side. The helical; Signal-anchor for type II membrane protein transmembrane segment at 5–25 (TLKYLTFFLLFIFLTSFVLNY) threads the bilayer. Over 26–337 (SNTGVPSAWF…INKIRIFKGR (312 aa)) the chain is Lumenal. Cystine bridges form between C56–C61, C58–C136, and C139–C278. N-linked (GlcNAc...) asparagine glycosylation occurs at N76. Residue Q102 coordinates substrate. N109 carries N-linked (GlcNAc...) asparagine glycosylation. Residues N144, N167, Y227, Y263, G267, G287, H296, and H313 each contribute to the substrate site. N320 carries N-linked (GlcNAc...) asparagine glycosylation.

The protein belongs to the glycosyltransferase 29 family. In terms of processing, the soluble form derives from the membrane form by proteolytic processing. As to expression, highly expressed in submaxillary gland and to a much lesser extent in liver, lung, kidney, heart and brain.

Its subcellular location is the golgi apparatus. It localises to the golgi stack membrane. The protein localises to the trans-Golgi network membrane. It is found in the secreted. It carries out the reaction a beta-D-galactosyl-(1-&gt;3)-N-acetyl-alpha-D-galactosaminyl derivative + CMP-N-acetyl-beta-neuraminate = an N-acetyl-alpha-neuraminyl-(2-&gt;3)-beta-D-galactosyl-(1-&gt;3)-N-acetyl-alpha-D-galactosaminyl derivative + CMP + H(+). It catalyses the reaction a ganglioside GM1 (d18:1(4E)) + CMP-N-acetyl-beta-neuraminate = a ganglioside GD1a (d18:1(4E)) + CMP + H(+). The enzyme catalyses ganglioside GM1 (d18:1(4E)/18:0) + CMP-N-acetyl-beta-neuraminate = ganglioside GD1a (18:1(4E)/18:0) + CMP + H(+). The catalysed reaction is a ganglioside GA1 + CMP-N-acetyl-beta-neuraminate = a ganglioside GM1b + CMP + H(+). It carries out the reaction a ganglioside GA1 (d18:1(4E)) + CMP-N-acetyl-beta-neuraminate = a ganglioside GM1b (d18:1(4E)) + CMP + H(+). It catalyses the reaction a ganglioside GD1b + CMP-N-acetyl-beta-neuraminate = a ganglioside GT1b + CMP + H(+). The enzyme catalyses a 3-O-[beta-D-galactosyl-(1-&gt;3)-N-acetyl-alpha-D-galactosaminyl]-L-threonyl-[protein] + CMP-N-acetyl-beta-neuraminate = a 3-O-[N-acetyl-alpha-neuraminyl-(2-&gt;3)-beta-D-galactosyl-(1-&gt;3)-N-acetyl-alpha-D-galactosaminyl]-L-threonyl-[protein] + CMP + H(+). The catalysed reaction is a 3-O-[beta-D-galactosyl-(1-&gt;3)-N-acetyl-alpha-D-galactosaminyl]-L-seryl-[protein] + CMP-N-acetyl-beta-neuraminate = 3-O-[N-acetyl-alpha-neuraminyl-(2-&gt;3)-beta-D-galactosyl-(1-&gt;3)-N-acetyl-alpha-D-galactosaminyl]-L-seryl-[protein] + CMP + H(+). Its pathway is protein modification; protein glycosylation. It participates in glycolipid biosynthesis. A beta-galactoside alpha2-&gt;3 sialyltransferase involved in terminal sialylation of glycoproteins and glycolipids. Catalyzes the transfer of sialic acid (N-acetyl-neuraminic acid; Neu5Ac) from the nucleotide sugar donor CMP-Neu5Ac onto acceptor Galbeta-(1-&gt;3)-GalNAc-terminated glycoconjugates through an alpha2-3 linkage. Adds sialic acid to the core 1 O-glycan, Galbeta-(1-&gt;3)-GalNAc-O-Ser/Thr, which is a major structure of mucin-type O-glycans. As part of a homeostatic mechanism that regulates CD8-positive T cell numbers, sialylates core 1 O-glycans of T cell glycoproteins, SPN/CD43 and PTPRC/CD45. Prevents premature apoptosis of thymic CD8-positive T cells prior to peripheral emigration, whereas in the secondary lymphoid organs controls the survival of CD8-positive memory T cells generated following a successful immune response. Transfers sialic acid to asialofetuin, presumably onto Galbeta-(1-&gt;3)-GalNAc-O-Ser. Sialylates GM1a, GA1 and GD1b gangliosides to form GD1a, GM1b and GT1b, respectively. This Mus musculus (Mouse) protein is CMP-N-acetylneuraminate-beta-galactosamide-alpha-2,3-sialyltransferase 1 (St3gal1).